Consider the following 141-residue polypeptide: Protein nfe1 (141 aa).

The protein to the N-terminal of nitrogenase iron protein (NifH). Has lost the ATP-binding site.

Its function is as follows. Responsible for the nodulation efficiency and competitive ability of strain GR4 on alfalfa roots. The protein is Protein nfe1 (nfe1) of Rhizobium meliloti (Ensifer meliloti).